Consider the following 591-residue polypeptide: Alternative cytochrome c oxidase subunit 1 (591 aa).

The helical transmembrane segment at Val-40–Ser-60 threads the bilayer. His-88 serves as a coordination point for heme b. The next 11 membrane-spanning stretches (helical) occupy residues Met-90 to Ile-110, Met-126 to Pro-146, Gly-172 to Leu-192, Val-215 to Gly-235, Leu-274 to Val-294, Val-313 to Val-333, Tyr-337 to Ile-357, Met-377 to Leu-397, Val-412 to Ile-432, Phe-453 to Leu-473, and Phe-498 to Val-518. Residues His-280, Tyr-284, His-329, and His-330 each coordinate Cu cation. Residues His-280–Tyr-284 constitute a cross-link (1'-histidyl-3'-tyrosine (His-Tyr)). 2 residues coordinate heme b: His-415 and His-417.

The protein belongs to the heme-copper respiratory oxidase family. As to quaternary structure, this alternate cytochrome c oxidase consists of a subunit I and two cytochromes c. Equivalents to subunit 2 and 3 are not present in this complex.

It localises to the cell membrane. It carries out the reaction 4 Fe(II)-[cytochrome c] + O2 + 8 H(+)(in) = 4 Fe(III)-[cytochrome c] + 2 H2O + 4 H(+)(out). In terms of biological role, cytochrome c oxidase is the component of the respiratory chain that catalyzes the reduction of oxygen to water. Subunits 1-3 form the functional core of the enzyme complex. Co I is the catalytic subunit of the enzyme. Electrons originating in cytochrome c are transferred via the copper A center of subunit 2 and a low-spin heme of subunit 1 to the bimetallic center formed by a high-spin heme and copper B. This is Alternative cytochrome c oxidase subunit 1 (coxN) from Bradyrhizobium diazoefficiens (strain JCM 10833 / BCRC 13528 / IAM 13628 / NBRC 14792 / USDA 110).